Here is a 323-residue protein sequence, read N- to C-terminus: Germination protease (323 aa).

Residues 1-6 (MSVRTD) constitute a propeptide that is removed on maturation.

The protein belongs to the peptidase A25 family. In terms of assembly, homotetramer. In terms of processing, autoproteolytically processed. The inactive tetrameric zymogen termed p46 autoprocesses to a smaller form termed p41, which is active only during spore germination.

The enzyme catalyses Endopeptidase action with P4 Glu or Asp, P1 preferably Glu &gt; Asp, P1' hydrophobic and P2' Ala.. In terms of biological role, initiates the rapid degradation of small, acid-soluble proteins during spore germination. The protein is Germination protease of Clostridium tetani (strain Massachusetts / E88).